The primary structure comprises 242 residues: Myogenic factor 6 (242 aa).

The tract at residues 30–63 (GSPLYPGSDGTLSPCQDQLPPEAGSDSSGEEHVL) is disordered. Residues 93 to 144 (DRRKAATLRERRRLKKINEAFEALKRRTVANPNQRLPKVEILRSAISYIERL) enclose the bHLH domain. Residues 190-210 (ASDHSRALGGSPKAGGSMVES) are disordered.

Efficient DNA binding requires dimerization with another bHLH protein. Skeletal muscle.

It localises to the nucleus. Its function is as follows. Involved in muscle differentiation (myogenic factor). Induces fibroblasts to differentiate into myoblasts. Probable sequence specific DNA-binding protein. The polypeptide is Myogenic factor 6 (MYF6) (Gallus gallus (Chicken)).